The chain runs to 439 residues: Serine hydroxymethyltransferase (439 aa).

Residues L119 and 123–125 contribute to the (6S)-5,6,7,8-tetrahydrofolate site; that span reads GHL. The residue at position 228 (K228) is an N6-(pyridoxal phosphate)lysine. 370–372 is a (6S)-5,6,7,8-tetrahydrofolate binding site; sequence SPF.

This sequence belongs to the SHMT family. In terms of assembly, homodimer. Pyridoxal 5'-phosphate serves as cofactor.

The protein localises to the cytoplasm. It catalyses the reaction (6R)-5,10-methylene-5,6,7,8-tetrahydrofolate + glycine + H2O = (6S)-5,6,7,8-tetrahydrofolate + L-serine. Its pathway is one-carbon metabolism; tetrahydrofolate interconversion. The protein operates within amino-acid biosynthesis; glycine biosynthesis; glycine from L-serine: step 1/1. In terms of biological role, catalyzes the reversible interconversion of serine and glycine with tetrahydrofolate (THF) serving as the one-carbon carrier. This reaction serves as the major source of one-carbon groups required for the biosynthesis of purines, thymidylate, methionine, and other important biomolecules. Also exhibits THF-independent aldolase activity toward beta-hydroxyamino acids, producing glycine and aldehydes, via a retro-aldol mechanism. This is Serine hydroxymethyltransferase from Chlorobium phaeobacteroides (strain BS1).